Consider the following 445-residue polypeptide: Phosphoglucosamine mutase (445 aa).

Ser102 functions as the Phosphoserine intermediate in the catalytic mechanism. Positions 102, 241, 243, and 245 each coordinate Mg(2+). Ser102 carries the phosphoserine modification.

It belongs to the phosphohexose mutase family. It depends on Mg(2+) as a cofactor. Post-translationally, activated by phosphorylation.

It catalyses the reaction alpha-D-glucosamine 1-phosphate = D-glucosamine 6-phosphate. Catalyzes the conversion of glucosamine-6-phosphate to glucosamine-1-phosphate. The sequence is that of Phosphoglucosamine mutase from Haemophilus influenzae (strain PittEE).